A 148-amino-acid polypeptide reads, in one-letter code: UPF0260 protein ESA_01462 (148 aa).

This sequence belongs to the UPF0260 family.

The sequence is that of UPF0260 protein ESA_01462 from Cronobacter sakazakii (strain ATCC BAA-894) (Enterobacter sakazakii).